Reading from the N-terminus, the 287-residue chain is Small ribosomal subunit protein uS10m (287 aa).

The transit peptide at 1-33 (MSLFSPHRILLRTGSAFQLATATRALLSTSSQL) directs the protein to the mitochondrion. The segment covering 33–43 (LRNTKNAQSGL) has biased composition (polar residues). The tract at residues 33-84 (LRNTKNAQSGLAEQARAEEPVASSPSQTTRPEQKSLEEETTKQTQTHADSTV) is disordered. The span at 63–73 (PEQKSLEEETT) shows a compositional bias: basic and acidic residues. Residues 74–84 (KQTQTHADSTV) are compositionally biased toward polar residues.

This sequence belongs to the universal ribosomal protein uS10 family. As to quaternary structure, part of the mitochondrial small ribosomal subunit.

The protein resides in the mitochondrion. Its function is as follows. Involved in mitochondrial genome encoded proteins translation. Involved in the binding of tRNA to the ribosomes. The sequence is that of Small ribosomal subunit protein uS10m (rsm10) from Emericella nidulans (strain FGSC A4 / ATCC 38163 / CBS 112.46 / NRRL 194 / M139) (Aspergillus nidulans).